The sequence spans 119 residues: Large ribosomal subunit protein bL19 (119 aa).

It belongs to the bacterial ribosomal protein bL19 family.

This protein is located at the 30S-50S ribosomal subunit interface and may play a role in the structure and function of the aminoacyl-tRNA binding site. This chain is Large ribosomal subunit protein bL19, found in Pelobacter propionicus (strain DSM 2379 / NBRC 103807 / OttBd1).